The primary structure comprises 264 residues: Sec-independent protein translocase protein TatC (264 aa).

6 consecutive transmembrane segments (helical) span residues Val20 to Glu40, Phe85 to Val105, Ala131 to Leu151, Phe175 to Ala195, Ile211 to Gly231, and Val232 to Ala252.

The protein belongs to the TatC family. In terms of assembly, forms a complex with TatA.

It localises to the cell membrane. Part of the twin-arginine translocation (Tat) system that transports large folded proteins containing a characteristic twin-arginine motif in their signal peptide across membranes. The protein is Sec-independent protein translocase protein TatC of Cenarchaeum symbiosum (strain A).